The primary structure comprises 464 residues: D-inositol 3-phosphate glycosyltransferase (464 aa).

The span at 1–20 (MEGAPRRPDRHARSEEERHV) shows a compositional bias: basic and acidic residues. The disordered stretch occupies residues 1–44 (MEGAPRRPDRHARSEEERHVSQYASRLGRRSPAAPTRRRMLRKP). His-53 lines the 1D-myo-inositol 3-phosphate pocket. Residues 59–60 (QP) and Gly-67 each bind UDP-N-acetyl-alpha-D-glucosamine. 1D-myo-inositol 3-phosphate is bound by residues 64–69 (DAGGMN), Lys-122, Tyr-155, Thr-179, and Arg-199. Residues Arg-274, Lys-279, and Val-340 each coordinate UDP-N-acetyl-alpha-D-glucosamine. Mg(2+) contacts are provided by Phe-349, Arg-350, and Ala-352. Positions 362 and 370 each coordinate UDP-N-acetyl-alpha-D-glucosamine. Thr-376 lines the Mg(2+) pocket.

It belongs to the glycosyltransferase group 1 family. MshA subfamily. As to quaternary structure, homodimer.

It catalyses the reaction 1D-myo-inositol 3-phosphate + UDP-N-acetyl-alpha-D-glucosamine = 1D-myo-inositol 2-acetamido-2-deoxy-alpha-D-glucopyranoside 3-phosphate + UDP + H(+). Its function is as follows. Catalyzes the transfer of a N-acetyl-glucosamine moiety to 1D-myo-inositol 3-phosphate to produce 1D-myo-inositol 2-acetamido-2-deoxy-glucopyranoside 3-phosphate in the mycothiol biosynthesis pathway. This Streptomyces avermitilis (strain ATCC 31267 / DSM 46492 / JCM 5070 / NBRC 14893 / NCIMB 12804 / NRRL 8165 / MA-4680) protein is D-inositol 3-phosphate glycosyltransferase.